Consider the following 485-residue polypeptide: Glutamyl-tRNA(Gln) amidotransferase subunit A (485 aa).

Residues lysine 78 and serine 153 each act as charge relay system in the active site. Residue serine 177 is the Acyl-ester intermediate of the active site.

Belongs to the amidase family. GatA subfamily. In terms of assembly, heterotrimer of A, B and C subunits.

The enzyme catalyses L-glutamyl-tRNA(Gln) + L-glutamine + ATP + H2O = L-glutaminyl-tRNA(Gln) + L-glutamate + ADP + phosphate + H(+). Functionally, allows the formation of correctly charged Gln-tRNA(Gln) through the transamidation of misacylated Glu-tRNA(Gln) in organisms which lack glutaminyl-tRNA synthetase. The reaction takes place in the presence of glutamine and ATP through an activated gamma-phospho-Glu-tRNA(Gln). The sequence is that of Glutamyl-tRNA(Gln) amidotransferase subunit A from Desulfotalea psychrophila (strain LSv54 / DSM 12343).